Here is a 354-residue protein sequence, read N- to C-terminus: Isopentenyl-diphosphate delta-isomerase (354 aa).

11-12 (KK) provides a ligand contact to substrate. Residues S67, 68–70 (SMT), S98, and N126 contribute to the FMN site. 98 to 100 (SFK) contacts substrate. Q160 is a binding site for substrate. Position 161 (E161) interacts with Mg(2+). FMN contacts are provided by residues K192, T222, and 289 to 290 (AA).

This sequence belongs to the IPP isomerase type 2 family. In terms of assembly, homooctamer. Dimer of tetramers. The cofactor is FMN. Requires NADPH as cofactor. It depends on Mg(2+) as a cofactor.

The protein resides in the cytoplasm. It catalyses the reaction isopentenyl diphosphate = dimethylallyl diphosphate. In terms of biological role, involved in the biosynthesis of isoprenoids. Catalyzes the 1,3-allylic rearrangement of the homoallylic substrate isopentenyl (IPP) to its allylic isomer, dimethylallyl diphosphate (DMAPP). This chain is Isopentenyl-diphosphate delta-isomerase, found in Borreliella afzelii (strain PKo) (Borrelia afzelii).